The following is a 341-amino-acid chain: L-threonine 3-dehydrogenase (341 aa).

A Zn(2+)-binding site is contributed by cysteine 38. Residues threonine 40 and histidine 43 each act as charge relay system in the active site. The Zn(2+) site is built by histidine 63, glutamate 64, cysteine 93, cysteine 96, cysteine 99, and cysteine 107. NAD(+) is bound by residues isoleucine 175, aspartate 195, arginine 200, 262–264 (LGI), and 286–287 (IY).

The protein belongs to the zinc-containing alcohol dehydrogenase family. In terms of assembly, homotetramer. The cofactor is Zn(2+).

The protein localises to the cytoplasm. The enzyme catalyses L-threonine + NAD(+) = (2S)-2-amino-3-oxobutanoate + NADH + H(+). It functions in the pathway amino-acid degradation; L-threonine degradation via oxydo-reductase pathway; glycine from L-threonine: step 1/2. Catalyzes the NAD(+)-dependent oxidation of L-threonine to 2-amino-3-ketobutyrate. This is L-threonine 3-dehydrogenase from Shewanella baltica (strain OS223).